Reading from the N-terminus, the 159-residue chain is Ribosomal RNA large subunit methyltransferase H (159 aa).

S-adenosyl-L-methionine contacts are provided by residues L76, G108, and 127–132; that span reads FSKMTF.

Belongs to the RNA methyltransferase RlmH family. Homodimer.

Its subcellular location is the cytoplasm. It carries out the reaction pseudouridine(1915) in 23S rRNA + S-adenosyl-L-methionine = N(3)-methylpseudouridine(1915) in 23S rRNA + S-adenosyl-L-homocysteine + H(+). Specifically methylates the pseudouridine at position 1915 (m3Psi1915) in 23S rRNA. In Geobacillus sp. (strain WCH70), this protein is Ribosomal RNA large subunit methyltransferase H.